A 480-amino-acid chain; its full sequence is MAAWCSPRWLRVAVGTPRLPAAAGRGVQQPQGGVVATSLCRKLCVSAFGLSMGAHGPRALLTLRPGVRLTGTKSFPFVCTTSFHTSASLAKDDYYQILGVPRNASQKDIKKAYYQLAKKYHPDTNKDDPKAKEKFSQLAEAYEVLSDEVKRKQYDAYGSAGFDPGTSSSGQGYWRGGPSVDPEELFRKIFGEFSSSPFGDFQNVFDQPQEYIMELTFNQAAKGVNKEFTVNIMDTCERCDGKGNEPGTKVQHCHYCGGSGMETINTGPFVMRSTCRRCGGRGSIITNPCVVCRGAGQAKQKKRVTIPVPAGVEDGQTVRMPVGKREIFVTFRVQKSPVFRRDGADIHSDLFISIAQAILGGTAKAQGLYETINVTIPAGIQTDQKIRLTGKGIPRINSYGYGDHYIHIKIRVPKRLSSRQQNLILSYAEDETDVEGTVNGVTHTSTGGRTMDSSAGSKDRREAGEDNEGFLSKLKKIFTS.

Arg-58 is subject to Omega-N-methylarginine; by CARM1. The J domain maps to 93 to 158 (DYYQILGVPR…VKRKQYDAYG (66 aa)). Position 134 is an N6-acetyllysine (Lys-134). The segment at 223 to 301 (GVNKEFTVNI…CRGAGQAKQK (79 aa)) adopts a CR-type zinc-finger fold. Cys-236 provides a ligand contact to Zn(2+). CXXCXGXG motif repeat units lie at residues 236–243 (CERCDGKG), 253–260 (CHYCGGSG), 275–282 (CRRCGGRG), and 289–296 (CVVCRGAG). Omega-N-methylarginine; by CARM1 is present on Arg-238. Zn(2+)-binding residues include Cys-239, Cys-253, Cys-256, Cys-275, Cys-278, Cys-289, and Cys-292. At Arg-293 the chain carries Omega-N-methylarginine; by CARM1. Ser-398 carries the post-translational modification Phosphoserine. Positions 437–468 (TVNGVTHTSTGGRTMDSSAGSKDRREAGEDNE) are disordered. Over residues 439-456 (NGVTHTSTGGRTMDSSAG) the composition is skewed to polar residues.

As to quaternary structure, interacts with JAK2, HSPA9B and IFN-gammaR2 chain. Interacts with Ras GTPase-activating protein 1 (RASA1). Isoform 2 interacts with MUSK (via the cytoplasmic domain). Post-translationally, tyrosine phosphorylated.

It is found in the mitochondrion matrix. It localises to the cytoplasm. Its subcellular location is the cytosol. The protein localises to the postsynaptic cell membrane. Modulates apoptotic signal transduction or effector structures within the mitochondrial matrix. Affect cytochrome C release from the mitochondria and caspase 3 activation, but not caspase 8 activation. Isoform 1 increases apoptosis triggered by both TNF and the DNA-damaging agent mytomycin C; in sharp contrast, isoform 2 suppresses apoptosis. Can modulate IFN-gamma-mediated transcriptional activity. Isoform 2 may play a role in neuromuscular junction development as an effector of the MUSK signaling pathway. The polypeptide is DnaJ homolog subfamily A member 3, mitochondrial (Dnaja3) (Mus musculus (Mouse)).